The sequence spans 431 residues: Large envelope protein (431 aa).

Gly2 is lipidated: N-myristoyl glycine; by host. Positions 2-148 are pre-S1; sequence GNNIKVTFNP…PPLRDTHPHL (147 aa). The pre-S stretch occupies residues 2-207; the sequence is GNNIKVTFNP…PSTTGDPALS (206 aa). At 2–214 the chain is on the virion surface; in external conformation side; sequence GNNIKVTFNP…ALSPEMSPSS (213 aa). The Intravirion; in internal conformation segment spans residues 2-286; the sequence is GNNIKVTFNP…NGFRWMYLRR (285 aa). An N-linked (GlcNAc...) asparagine glycan is attached at Asn3. Positions 115–147 are disordered; it reads IPRGLVPPQTPTNRDQGRKPTPPTPPLRDTHPH. Residues 149 to 207 are pre-S2; that stretch reads TMKNQTFHLQGFVDGLRDLTTTERQHNAYRDPFTTLSPAVPTVSTILSPPSTTGDPALS. The helical transmembrane segment at 215-235 threads the bilayer; the sequence is LLGLLAGLQVVYFLWTKILTI. Topologically, residues 236–286 are intravirion; in external conformation; that stretch reads AQNLDWWCTSLSFPGGIPECTGQNSQFQTCKHLPTSCPPTCNGFRWMYLRR. The chain crosses the membrane as a helical span at residues 287–307; sequence FIIYLLVLLLCLIFLLVLLDW. Residues 308-379 are Virion surface-facing; that stretch reads KGLIPVCPLQ…WALARLSWLN (72 aa). An N-linked (GlcNAc...) asparagine; by host glycan is attached at Asn351. A helical membrane pass occupies residues 380–400; sequence LLVPLLQWLGGISLIAWFLLI. Residues 401–406 lie on the Intravirion side of the membrane; it reads WMIWFW. Residues 407-429 form a helical membrane-spanning segment; sequence GPALLSILPPFIPIFVLFFLIWV. The Virion surface portion of the chain corresponds to 430 to 431; that stretch reads YI.

It belongs to the orthohepadnavirus major surface antigen family. In terms of assembly, in its internal form (Li-HBsAg), interacts with the capsid protein and with the isoform S. Interacts with host chaperone CANX. As to quaternary structure, associates with host chaperone CANX through its pre-S2 N glycan; this association may be essential for isoform M proper secretion. Interacts with isoform L. Interacts with the antigens of satellite virus HDV (HDVAgs); this interaction is required for encapsidation of HDV genomic RNA. In terms of processing, isoform M is N-terminally acetylated by host at a ratio of 90%, and N-glycosylated by host at the pre-S2 region. Myristoylated.

The protein resides in the virion membrane. Functionally, the large envelope protein exists in two topological conformations, one which is termed 'external' or Le-HBsAg and the other 'internal' or Li-HBsAg. In its external conformation the protein attaches the virus to cell receptors and thereby initiating infection. This interaction determines the species specificity and liver tropism. This attachment induces virion internalization predominantly through caveolin-mediated endocytosis. The large envelope protein also assures fusion between virion membrane and endosomal membrane. In its internal conformation the protein plays a role in virion morphogenesis and mediates the contact with the nucleocapsid like a matrix protein. Its function is as follows. The middle envelope protein plays an important role in the budding of the virion. It is involved in the induction of budding in a nucleocapsid independent way. In this process the majority of envelope proteins bud to form subviral lipoprotein particles of 22 nm of diameter that do not contain a nucleocapsid. The chain is Large envelope protein from Marmota monax (Woodchuck).